Reading from the N-terminus, the 559-residue chain is Formate--tetrahydrofolate ligase (559 aa).

68 to 75 contributes to the ATP binding site; that stretch reads TPAGEGKT.

It belongs to the formate--tetrahydrofolate ligase family.

The catalysed reaction is (6S)-5,6,7,8-tetrahydrofolate + formate + ATP = (6R)-10-formyltetrahydrofolate + ADP + phosphate. It functions in the pathway one-carbon metabolism; tetrahydrofolate interconversion. This Rhizobium rhizogenes (strain K84 / ATCC BAA-868) (Agrobacterium radiobacter) protein is Formate--tetrahydrofolate ligase.